Here is a 215-residue protein sequence, read N- to C-terminus: Orotate phosphoribosyltransferase (215 aa).

5-phospho-alpha-D-ribose 1-diphosphate is bound at residue lysine 26. 34-35 (FF) provides a ligand contact to orotate. Residues 72–73 (YK), arginine 99, lysine 100, lysine 103, histidine 105, and 125–133 (DDVISSGIS) each bind 5-phospho-alpha-D-ribose 1-diphosphate. Residues serine 129 and arginine 157 each contribute to the orotate site.

Belongs to the purine/pyrimidine phosphoribosyltransferase family. PyrE subfamily. In terms of assembly, homodimer. Mg(2+) serves as cofactor.

The enzyme catalyses orotidine 5'-phosphate + diphosphate = orotate + 5-phospho-alpha-D-ribose 1-diphosphate. It participates in pyrimidine metabolism; UMP biosynthesis via de novo pathway; UMP from orotate: step 1/2. Functionally, catalyzes the transfer of a ribosyl phosphate group from 5-phosphoribose 1-diphosphate to orotate, leading to the formation of orotidine monophosphate (OMP). The polypeptide is Orotate phosphoribosyltransferase (Halorhodospira halophila (strain DSM 244 / SL1) (Ectothiorhodospira halophila (strain DSM 244 / SL1))).